The chain runs to 252 residues: Glucosamine-6-phosphate deaminase (252 aa).

Aspartate 67 serves as the catalytic Proton acceptor; for enolization step. Asparagine 137 acts as the For ring-opening step in catalysis. Histidine 139 (proton acceptor; for ring-opening step) is an active-site residue. Glutamate 144 serves as the catalytic For ring-opening step.

The protein belongs to the glucosamine/galactosamine-6-phosphate isomerase family. NagB subfamily.

It catalyses the reaction alpha-D-glucosamine 6-phosphate + H2O = beta-D-fructose 6-phosphate + NH4(+). It functions in the pathway amino-sugar metabolism; N-acetylneuraminate degradation; D-fructose 6-phosphate from N-acetylneuraminate: step 5/5. Functionally, catalyzes the reversible isomerization-deamination of glucosamine 6-phosphate (GlcN6P) to form fructose 6-phosphate (Fru6P) and ammonium ion. The polypeptide is Glucosamine-6-phosphate deaminase (Staphylococcus aureus (strain MRSA252)).